Here is a 570-residue protein sequence, read N- to C-terminus: MALVRFATIITVLCHLAIQDGAAKSFPHGEKAPFPLTLIHINDLHARFDETNQKSSTCTNSKECIAGIARVYHTIKQLKSEYKTKNPLYLNAGDNFQGTLWYNLLRWNVTAYFIKELPPDAMTLGNHEFDHSPKGLAPYLAELEKMKIPTVVANLEKNGEPALKDSKIARSIVLKVGNRKVGVIGALYDKTHLVAQTGMVTLTNSIEAVRKEAQELKKKNVNIIVVLSHCGLDGDKQLAEEAGDLIDVIVGAHSHSLLLNKDAKVPYDTKYDTIEGDYPLVVKKSNNHTVLITQARSFGKYVGRLTVNFDCEGEVQSWEGYPIYMNNSVKQDEEVLRELEPWRAEVKRLGTQVIGTTEVFLDRESCRWCECTLGDLIADAYADQYTNSTVQPVAFVQAGNFRNPIEKGDITNGLAIEAAPYGSSVDMIKLSGADLWSAIDHSFTLDDEFRYNTAQVSGMAVVADLSKKPYERVQSIDIVGANGAKTALKKDQIYYVVVPSYLADGKDGFAMLKKGTNRVTGPLDSDVLIEYVRKRQTIAKTMFQEKRVVIENHTNGTCSWDLDSQRYKPK.

Residues 1 to 23 (MALVRFATIITVLCHLAIQDGAA) form the signal peptide. 3 residues coordinate a divalent metal cation: aspartate 43, histidine 45, and aspartate 94. Asparagine 108 carries N-linked (GlcNAc...) asparagine glycosylation. Positions 126, 229, and 253 each coordinate a divalent metal cation. Asparagine 287 and asparagine 326 each carry an N-linked (GlcNAc...) asparagine glycan. An AMP-binding site is contributed by arginine 367. The N-linked (GlcNAc...) asparagine glycan is linked to asparagine 387. Arginine 402 and aspartate 507 together coordinate AMP. N-linked (GlcNAc...) asparagine glycans are attached at residues asparagine 552 and asparagine 555.

Belongs to the 5'-nucleotidase family. As to quaternary structure, interacts with human PLAT; the interaction results in PLAT activation probably via an allosteric activation mechanism. The cofactor is a divalent metal cation. As to expression, saliva (at protein level). Salivary gland (at protein level). Not detected in midgut.

It is found in the secreted. The catalysed reaction is a ribonucleoside 5'-triphosphate + 2 H2O = a ribonucleoside 5'-phosphate + 2 phosphate + 2 H(+). Functionally, cleaves adenosine triphosphate (ATP) and adenosine diphosphate (ADP) to adenosine monophosphate (AMP) and inorganic phosphate. Enhances fibrin degradation in the midgut blood bolus. Activates human tissue plasminogen activator (PLAT), probably via an allosteric activation mechanism. Inhibits ADP-mediated host platelet aggregation in vitro and in mosquito midgut. Inhibits host neutrophil activation in the mosquito midgut: reduces neutrophil extracellular traps formation in the presence of platelets and the formation of total cell- and mitochondrial-derived reactive oxygen species. In terms of biological role, (Microbial infection) Promotes Plasmodium berghei parasite transmission from the mammalian host to the mosquito probably by reducing the blood bolus viscosity. Facilitates sporozoite transmission from the mosquito to the mammalian host during blood feeding. This Anopheles gambiae (African malaria mosquito) protein is Apyrase.